The primary structure comprises 620 residues: MDSHTLVQALIYLGSAALIVPIAVRLGLGSVLGYLIAGCIIGLWGLRLVTDAESILHFAEIGVVLMLFIIGLELDPQRLWKLRAAVFGGGALQMVICGGLLGLFCMLLGLRWQVAELIGMTLALSSTAIAMQAMNERNLMVTQMGRSAFAVLLFQDIAAILLVAMIPLLAASSASTTMGAFALSALKVAGALVLVVLLGRYVTRPALRFVARSGLREVFSAVALFLVFGFGLLLEEVGLSMAMGAFLAGVLLASSEYRHALESDIEPFKGLLLGLFFIGVGMSIDFGTLIENPLRIVILLLGFLIIKIAMLWLIARPLQVPNKQRRWFAVLLGQGSEFAFVVFGAAQMANVLEPEWAKSLTLAVALSMAATPILLVILNRLEQSSTEEAREADEIDEEQPRVIIAGFGRFGQITGRLLLSSGVKMVVLDHDPDHIETLRKFGMKVFYGDATRMDLLESAGAAKAEVLINAIDDPQTNLQLTEMVKEHFPHLQIIARARDVDHYIRLRQAGVEKPERETFEGALKTGRLALESLGLGPYEARERADVFRRFNIQMVEEMAMVENDTKARAAVYKRTSAMLSEIITEDREHLSLIQRHGWQGTEEGKHTGNMADEPETKPSS.

A run of 12 helical transmembrane segments spans residues 4–24, 26–46, 54–74, 90–110, 114–134, 149–169, 178–198, 218–238, 270–290, 294–314, 327–347, and 359–379; these read HTLV…PIAV, LGLG…LWGL, SILH…GLEL, GALQ…LLGL, VAEL…MQAM, FAVL…IPLL, MGAF…VVLL, VFSA…EEVG, GLLL…GTLI, LRIV…LWLI, WFAV…GAAQ, and SLTL…VILN. An RCK N-terminal domain is found at 399–518; that stretch reads QPRVIIAGFG…AGVEKPERET (120 aa). The disordered stretch occupies residues 597-620; it reads GWQGTEEGKHTGNMADEPETKPSS.

The protein belongs to the monovalent cation:proton antiporter 2 (CPA2) transporter (TC 2.A.37) family. KefC subfamily. In terms of assembly, homodimer. Interacts with the regulatory subunit KefF.

The protein localises to the cell inner membrane. Functionally, pore-forming subunit of a potassium efflux system that confers protection against electrophiles. Catalyzes K(+)/H(+) antiport. In Shigella flexneri serotype 5b (strain 8401), this protein is Glutathione-regulated potassium-efflux system protein KefC.